The chain runs to 71 residues: uncharacterized protein (71 aa).

The first 19 residues, Met-1 to Ser-19, serve as a signal peptide directing secretion.

This is an uncharacterized protein from Pasteurella multocida (strain Pm70).